Consider the following 315-residue polypeptide: Iron(3+)-hydroxamate-binding protein FhuD (315 aa).

The first 23 residues, 1–23, serve as a signal peptide directing secretion; the sequence is MTHIYKKLGAAFFALLLIAALAA. Residue Cys24 is the site of N-palmitoyl cysteine attachment. Cys24 carries S-diacylglycerol cysteine lipidation. The Fe/B12 periplasmic-binding domain occupies 60–315; sequence RVVVMADGYY…LEFITESLTK (256 aa).

Belongs to the bacterial solute-binding protein 8 family. In terms of assembly, the complex is composed of an ATP-binding protein (FhuC), two transmembrane proteins (FhuB and FhuG) and a solute-binding protein (FhuD or YxeB).

The protein resides in the cell membrane. It localises to the membrane raft. Its function is as follows. Part of the ABC transporter complex FhuCBGD involved in iron(3+)-hydroxamate import. Binds the iron(3+)-hydroxamate complex and transfers it to the membrane-bound permease. Required for the transport of ferrichrome and coprogen. The sequence is that of Iron(3+)-hydroxamate-binding protein FhuD (fhuD) from Bacillus subtilis (strain 168).